The sequence spans 314 residues: Methionyl-tRNA formyltransferase (314 aa).

Position 110–113 (110–113 (SLLP)) interacts with (6S)-5,6,7,8-tetrahydrofolate.

The protein belongs to the Fmt family.

The catalysed reaction is L-methionyl-tRNA(fMet) + (6R)-10-formyltetrahydrofolate = N-formyl-L-methionyl-tRNA(fMet) + (6S)-5,6,7,8-tetrahydrofolate + H(+). Functionally, attaches a formyl group to the free amino group of methionyl-tRNA(fMet). The formyl group appears to play a dual role in the initiator identity of N-formylmethionyl-tRNA by promoting its recognition by IF2 and preventing the misappropriation of this tRNA by the elongation apparatus. The chain is Methionyl-tRNA formyltransferase from Lactobacillus gasseri (strain ATCC 33323 / DSM 20243 / BCRC 14619 / CIP 102991 / JCM 1131 / KCTC 3163 / NCIMB 11718 / NCTC 13722 / AM63).